A 158-amino-acid polypeptide reads, in one-letter code: Small ribosomal subunit protein uS7 (158 aa).

It belongs to the universal ribosomal protein uS7 family. In terms of assembly, part of the 30S ribosomal subunit. Contacts proteins S9 and S11.

Functionally, one of the primary rRNA binding proteins, it binds directly to 16S rRNA where it nucleates assembly of the head domain of the 30S subunit. Is located at the subunit interface close to the decoding center, probably blocks exit of the E-site tRNA. The polypeptide is Small ribosomal subunit protein uS7 (Flavobacterium johnsoniae (strain ATCC 17061 / DSM 2064 / JCM 8514 / BCRC 14874 / CCUG 350202 / NBRC 14942 / NCIMB 11054 / UW101) (Cytophaga johnsonae)).